The sequence spans 396 residues: Elongation factor Tu (396 aa).

The tr-type G domain maps to 10–206; it reads KPHVNVGTIG…ALDSYIPEPE (197 aa). The G1 stretch occupies residues 19-26; it reads GHVDHGKT. 19 to 26 is a binding site for GTP; that stretch reads GHVDHGKT. Thr-26 lines the Mg(2+) pocket. The interval 60–64 is G2; the sequence is GITIN. The tract at residues 81 to 84 is G3; it reads DCPG. Residues 81–85 and 136–139 each bind GTP; these read DCPGH and NKAD. Residues 136-139 are G4; it reads NKAD. The G5 stretch occupies residues 174–176; the sequence is SAL.

Belongs to the TRAFAC class translation factor GTPase superfamily. Classic translation factor GTPase family. EF-Tu/EF-1A subfamily. As to quaternary structure, monomer.

It is found in the cytoplasm. It catalyses the reaction GTP + H2O = GDP + phosphate + H(+). Its function is as follows. GTP hydrolase that promotes the GTP-dependent binding of aminoacyl-tRNA to the A-site of ribosomes during protein biosynthesis. This is Elongation factor Tu from Nitrosomonas europaea (strain ATCC 19718 / CIP 103999 / KCTC 2705 / NBRC 14298).